We begin with the raw amino-acid sequence, 102 residues long: 10 kDa heat shock protein, mitochondrial (102 aa).

A2 is subject to N-acetylalanine. At K8 the chain carries N6-acetyllysine. The residue at position 28 (K28) is an N6-succinyllysine. Residue K40 is modified to N6-acetyllysine; alternate. An N6-malonyllysine; alternate mark is found at K40, K54, and K56. An N6-succinyllysine; alternate mark is found at K40, K54, K56, K66, and K70. K56, K66, and K70 each carry N6-acetyllysine; alternate. T79 carries the phosphothreonine modification. 2 positions are modified to N6-acetyllysine; alternate: K80 and K86. N6-succinyllysine; alternate is present on residues K80 and K86. K99 is modified (N6-acetyllysine).

The protein belongs to the GroES chaperonin family. As to quaternary structure, homoheptamer arranged in a ring structure. 2 heptameric Hsp10 rings interact with a Hsp60 tetradecamer in the structure of a back-to-back double heptameric ring to form the symmetrical football complex.

It is found in the mitochondrion matrix. Functionally, co-chaperonin implicated in mitochondrial protein import and macromolecular assembly. Together with Hsp60, facilitates the correct folding of imported proteins. May also prevent misfolding and promote the refolding and proper assembly of unfolded polypeptides generated under stress conditions in the mitochondrial matrix. The functional units of these chaperonins consist of heptameric rings of the large subunit Hsp60, which function as a back-to-back double ring. In a cyclic reaction, Hsp60 ring complexes bind one unfolded substrate protein per ring, followed by the binding of ATP and association with 2 heptameric rings of the co-chaperonin Hsp10. This leads to sequestration of the substrate protein in the inner cavity of Hsp60 where, for a certain period of time, it can fold undisturbed by other cell components. Synchronous hydrolysis of ATP in all Hsp60 subunits results in the dissociation of the chaperonin rings and the release of ADP and the folded substrate protein. The chain is 10 kDa heat shock protein, mitochondrial (HSPE1) from Bos taurus (Bovine).